The sequence spans 682 residues: Potassium-transporting ATPase ATP-binding subunit (682 aa).

4 consecutive transmembrane segments (helical) span residues 34–54, 62–82, 219–239, and 254–274; these read PVMF…IAMA, ALFS…ANFA, IALT…TATL, and VLVA…LSAI. The active-site 4-aspartylphosphate intermediate is the Asp-307. ATP contacts are provided by residues Asp-344, Glu-348, 377 to 384, and Lys-395; that span reads FTAQSRMS. Residues Asp-518 and Asp-522 each coordinate Mg(2+). 3 helical membrane passes run 588 to 608, 616 to 636, and 656 to 676; these read FAII…LNIM, AILS…PLAL, and IYGL…DLLL.

The protein belongs to the cation transport ATPase (P-type) (TC 3.A.3) family. Type IA subfamily. The system is composed of three essential subunits: KdpA, KdpB and KdpC.

The protein resides in the cell inner membrane. It carries out the reaction K(+)(out) + ATP + H2O = K(+)(in) + ADP + phosphate + H(+). Functionally, part of the high-affinity ATP-driven potassium transport (or Kdp) system, which catalyzes the hydrolysis of ATP coupled with the electrogenic transport of potassium into the cytoplasm. This subunit is responsible for energy coupling to the transport system and for the release of the potassium ions to the cytoplasm. In Shigella boydii serotype 18 (strain CDC 3083-94 / BS512), this protein is Potassium-transporting ATPase ATP-binding subunit.